Here is a 397-residue protein sequence, read N- to C-terminus: CCA-adding enzyme (397 aa).

Residues Gly27 and Arg30 each coordinate ATP. Positions 27 and 30 each coordinate CTP. The Mg(2+) site is built by Asp40 and Asp42. Positions 111, 154, 157, 160, and 163 each coordinate ATP. CTP is bound by residues Arg111, Asp154, Arg157, Arg160, and Arg163.

The protein belongs to the tRNA nucleotidyltransferase/poly(A) polymerase family. Bacterial CCA-adding enzyme type 3 subfamily. In terms of assembly, homodimer. It depends on Mg(2+) as a cofactor.

It carries out the reaction a tRNA precursor + 2 CTP + ATP = a tRNA with a 3' CCA end + 3 diphosphate. The catalysed reaction is a tRNA with a 3' CCA end + 2 CTP + ATP = a tRNA with a 3' CCACCA end + 3 diphosphate. Catalyzes the addition and repair of the essential 3'-terminal CCA sequence in tRNAs without using a nucleic acid template. Adds these three nucleotides in the order of C, C, and A to the tRNA nucleotide-73, using CTP and ATP as substrates and producing inorganic pyrophosphate. tRNA 3'-terminal CCA addition is required both for tRNA processing and repair. Also involved in tRNA surveillance by mediating tandem CCA addition to generate a CCACCA at the 3' terminus of unstable tRNAs. While stable tRNAs receive only 3'-terminal CCA, unstable tRNAs are marked with CCACCA and rapidly degraded. The chain is CCA-adding enzyme from Bacillus licheniformis (strain ATCC 14580 / DSM 13 / JCM 2505 / CCUG 7422 / NBRC 12200 / NCIMB 9375 / NCTC 10341 / NRRL NRS-1264 / Gibson 46).